The following is a 201-amino-acid chain: Hydroxymethylphosphonate dioxygenase (201 aa).

The Fe cation site is built by His-47, His-71, Asp-72, His-94, His-117, and Asp-174.

Requires Fe(2+) as cofactor.

The enzyme catalyses hydroxymethylphosphonate + O2 = formate + phosphate + 2 H(+). The catalysed reaction is (1R)-(2-amino-1-hydroxyethyl)phosphonate + O2 = glycine + phosphate + 2 H(+). It carries out the reaction (1R)-(1-hydroxyethyl)phosphonate + O2 = acetate + phosphate + 2 H(+). In terms of biological role, part of an oxidative pathway for utilization of methylphosphonic acid as a phosphate source. Catalyzes the oxidation of hydroxymethylphosphonic acid to produce formate and phosphate. Can also use (1R)-(2-amino-1-hydroxyethyl)phosphonic acid and (R)-1-hydroxyethylphosphonic acid with similar catalytic efficiency. The chain is Hydroxymethylphosphonate dioxygenase from Gimesia maris (strain ATCC 29201 / DSM 8797 / 534-30) (Planctomyces maris).